Here is a 2410-residue protein sequence, read N- to C-terminus: Dual specificity protein kinase splA (2410 aa).

Disordered stretches follow at residues 29-48 (NNNN…NNNN), 66-103 (NHPS…GELT), 116-158 (NTQT…SNGG), 187-252 (NISP…SSGI), 508-647 (QQLQ…VPSA), and 659-820 (SSSS…KKEG). 2 stretches are compositionally biased toward low complexity: residues 116 to 128 (NTQT…TSPN) and 137 to 158 (NTTT…SNGG). The segment covering 514–525 (QPPPTIQPPPQQ) has biased composition (pro residues). Over residues 530-544 (LRGNRSSGNLSGLNS) the composition is skewed to low complexity. Positions 545-554 (FSLKQSTDSL) are enriched in polar residues. Positions 560 to 583 (SQQSTVSSNSTPIAATPISPLTAP) are enriched in low complexity. Residues 584 to 594 (TSPPPPPPPPT) are compositionally biased toward pro residues. Low complexity-rich tracts occupy residues 595–618 (NFNS…NTTV), 627–639 (VLPK…SPRP), 659–686 (SSSS…LNIS), 701–738 (SPSY…SPSV), 746–759 (ISPN…PNIS), and 777–813 (NTNN…NNTN). 2 consecutive B30.2/SPRY domains span residues 822–1004 (SSWF…GPFS) and 1020–1209 (DSGG…PPFK). Disordered stretches follow at residues 1228–1428 (PNGN…NNIY) and 1493–1512 (SLGV…PRKI). 4 stretches are compositionally biased toward low complexity: residues 1229-1359 (NGNN…NNNI), 1373-1399 (SSTG…NNSS), 1419-1428 (SSTNNNNNIY), and 1493-1507 (SLGV…SPKT). A B30.2/SPRY 3 domain is found at 1481 to 1703 (PITASTNHTL…CVATFPGGHF (223 aa)). An SAM domain is found at 1734-1798 (WAPNDVAIWL…INRLNRMIQI (65 aa)). A disordered region spans residues 1862-2105 (KSYTQKEIED…PPPPPQLPVR (244 aa)). Over residues 1865-1874 (TQKEIEDRNR) the composition is skewed to basic and acidic residues. Positions 1951 to 1967 (SVSSTGGSSGFLTFPSS) are enriched in low complexity. A compositionally biased stretch (polar residues) spans 1989–2002 (ITSNYKGITNTGQP). Residues 2020-2070 (SNNGNNGNNNNNNNNNNIKANQQQQQQSSYQQSQTQQQQQHITSTSTSTTN) are compositionally biased toward low complexity. Over residues 2089–2102 (PSRPPPPPPPPPQL) the composition is skewed to pro residues. Residues 2115 to 2387 (LEFGQTIGKG…FKQIIVHLKE (273 aa)) form the Protein kinase domain. ATP-binding positions include 2121 to 2129 (IGKGFFGEV) and lysine 2142. The Proton acceptor role is filled by aspartate 2243.

The protein belongs to the protein kinase superfamily. TKL Tyr protein kinase family. In terms of processing, tyrosine kinase domain is capable of autophosphorylation, in vitro; however it is also autophosphorylated on serine and threonine residues.

The catalysed reaction is L-tyrosyl-[protein] + ATP = O-phospho-L-tyrosyl-[protein] + ADP + H(+). Functionally, essential for spore differentiation. The polypeptide is Dual specificity protein kinase splA (splA) (Dictyostelium discoideum (Social amoeba)).